The chain runs to 72 residues: ATP synthase subunit c (72 aa).

2 consecutive transmembrane segments (helical) span residues 5–25 (LLAAGIAVLAGIGAGIGIGIA) and 52–72 (GLSEATAIYGLVISIILLFVV).

The protein belongs to the ATPase C chain family. In terms of assembly, F-type ATPases have 2 components, F(1) - the catalytic core - and F(0) - the membrane proton channel. F(1) has five subunits: alpha(3), beta(3), gamma(1), delta(1), epsilon(1). F(0) has three main subunits: a(1), b(2) and c(10-14). The alpha and beta chains form an alternating ring which encloses part of the gamma chain. F(1) is attached to F(0) by a central stalk formed by the gamma and epsilon chains, while a peripheral stalk is formed by the delta and b chains.

It localises to the cell membrane. In terms of biological role, f(1)F(0) ATP synthase produces ATP from ADP in the presence of a proton or sodium gradient. F-type ATPases consist of two structural domains, F(1) containing the extramembraneous catalytic core and F(0) containing the membrane proton channel, linked together by a central stalk and a peripheral stalk. During catalysis, ATP synthesis in the catalytic domain of F(1) is coupled via a rotary mechanism of the central stalk subunits to proton translocation. Key component of the F(0) channel; it plays a direct role in translocation across the membrane. A homomeric c-ring of between 10-14 subunits forms the central stalk rotor element with the F(1) delta and epsilon subunits. This is ATP synthase subunit c from Clostridium perfringens (strain SM101 / Type A).